The chain runs to 156 residues: ATP synthase subunit b (156 aa).

The chain crosses the membrane as a helical span at residues 7–29 (LFAQMVVFLVLAWFTMKFVWPPL).

It belongs to the ATPase B chain family. F-type ATPases have 2 components, F(1) - the catalytic core - and F(0) - the membrane proton channel. F(1) has five subunits: alpha(3), beta(3), gamma(1), delta(1), epsilon(1). F(0) has three main subunits: a(1), b(2) and c(10-14). The alpha and beta chains form an alternating ring which encloses part of the gamma chain. F(1) is attached to F(0) by a central stalk formed by the gamma and epsilon chains, while a peripheral stalk is formed by the delta and b chains.

The protein localises to the cell inner membrane. Its function is as follows. F(1)F(0) ATP synthase produces ATP from ADP in the presence of a proton or sodium gradient. F-type ATPases consist of two structural domains, F(1) containing the extramembraneous catalytic core and F(0) containing the membrane proton channel, linked together by a central stalk and a peripheral stalk. During catalysis, ATP synthesis in the catalytic domain of F(1) is coupled via a rotary mechanism of the central stalk subunits to proton translocation. Functionally, component of the F(0) channel, it forms part of the peripheral stalk, linking F(1) to F(0). The sequence is that of ATP synthase subunit b from Burkholderia vietnamiensis (strain G4 / LMG 22486) (Burkholderia cepacia (strain R1808)).